A 549-amino-acid polypeptide reads, in one-letter code: Polymorphic pseudokinase ROP5 (549 aa).

The N-terminal stretch at 1–24 (MATKLARLATWLVLVGCLLWRAGA) is a signal peptide. The Protein kinase domain occupies 234–527 (LKLVEPLRVG…LEAMETPEFL (294 aa)). ATP contacts are provided by Arg241, Asp244, Arg245, Ser246, Lys263, Met337, Pro338, Ala340, Asp343, and Asp393. Residue Asp244 participates in ADP binding. Residues Ser246, Lys263, Met337, Pro338, and Ala340 each contribute to the ADP site. Position 393 (Asp393) interacts with ADP. Mg(2+)-binding residues include Asp393 and Asp407. N-linked (GlcNAc...) asparagine glycosylation is present at Asn434. Residues Cys458 and Cys492 are joined by a disulfide bond.

The protein belongs to the protein kinase superfamily. Ser/Thr protein kinase family. As to quaternary structure, component of a complex at least composed of ROP18 and ROP5. Interacts with GRA7. Interacts with ROP17. Interacts with mouse IRGA6/IIGP1; the interaction results in inhibition of IRGA6/IIGP1 GTPase activity and/or oligomerization.

Its subcellular location is the secreted. It is found in the parasitophorous vacuole. It localises to the cytoplasmic vesicle. The protein localises to the secretory vesicle. The protein resides in the rhoptry. Pseudokinase. Essential for virulence in the type I lineage. Mediates parasite survival in mouse monocytes. Required for the parasite ability to resist mouse innate immune effectors triggered by the IFN-gamma (IFNG). Reduces the accumulation of mouse IRGA6 (IIGP1) and IRGB6 (TGTP1/TGTP2), immunity-related GTPases (IRGs) that protect mice from infection by certain intracellular pathogens, on the parasitophorous vacuole and IRG-mediated killing of parasites by mouse cells. Regulates the activity of ROP18, an active kinase that targets IRGs to prevent IRG-mediated parasite killing by mouse cells. Acts as an allosteric inhibitor of mouse IRGA6 (IIGP1). Does not affect IFN-gamma (IFNG)-mediated parasite killing in human cells that do not possess the large variety of IRGs. The protein is Polymorphic pseudokinase ROP5 of Toxoplasma gondii.